The chain runs to 329 residues: Beta-ketoacyl-[acyl-carrier-protein] synthase III (329 aa).

Catalysis depends on residues Cys-123 and His-256. Positions Gln-257–Arg-261 are ACP-binding. Asn-286 is a catalytic residue.

Belongs to the thiolase-like superfamily. FabH family. Homodimer.

The protein resides in the cytoplasm. The enzyme catalyses malonyl-[ACP] + acetyl-CoA + H(+) = 3-oxobutanoyl-[ACP] + CO2 + CoA. The protein operates within lipid metabolism; fatty acid biosynthesis. Functionally, catalyzes the condensation reaction of fatty acid synthesis by the addition to an acyl acceptor of two carbons from malonyl-ACP. Catalyzes the first condensation reaction which initiates fatty acid synthesis and may therefore play a role in governing the total rate of fatty acid production. Possesses both acetoacetyl-ACP synthase and acetyl transacylase activities. Its substrate specificity determines the biosynthesis of branched-chain and/or straight-chain of fatty acids. This Burkholderia thailandensis (strain ATCC 700388 / DSM 13276 / CCUG 48851 / CIP 106301 / E264) protein is Beta-ketoacyl-[acyl-carrier-protein] synthase III.